The chain runs to 279 residues: uncharacterized protein (279 aa).

This is an uncharacterized protein from Bacillus subtilis (strain 168).